The sequence spans 338 residues: Phenylalanine--tRNA ligase alpha subunit (338 aa).

E253 provides a ligand contact to Mg(2+).

This sequence belongs to the class-II aminoacyl-tRNA synthetase family. Phe-tRNA synthetase alpha subunit type 1 subfamily. In terms of assembly, tetramer of two alpha and two beta subunits. It depends on Mg(2+) as a cofactor.

Its subcellular location is the cytoplasm. The catalysed reaction is tRNA(Phe) + L-phenylalanine + ATP = L-phenylalanyl-tRNA(Phe) + AMP + diphosphate + H(+). The chain is Phenylalanine--tRNA ligase alpha subunit from Legionella pneumophila (strain Paris).